The chain runs to 272 residues: Probable ribonuclease HI_0526 (272 aa).

The signal sequence occupies residues 1 to 23 (MKKLTSILSLIVLVILAIWQYFT). Catalysis depends on residues H148, E195, and H199.

It belongs to the RNase T2 family.

This is Probable ribonuclease HI_0526 from Haemophilus influenzae (strain ATCC 51907 / DSM 11121 / KW20 / Rd).